The chain runs to 214 residues: Orotidine 5'-phosphate decarboxylase (214 aa).

Residues Asp-11, Lys-33, 59–68 (DFKIADIPNT), Ser-114, 164–174 (PGIGSQGGRAS), Gly-187, and Arg-188 each bind substrate. Catalysis depends on Lys-61, which acts as the Proton donor.

Belongs to the OMP decarboxylase family. Type 1 subfamily. As to quaternary structure, homodimer.

It carries out the reaction orotidine 5'-phosphate + H(+) = UMP + CO2. It functions in the pathway pyrimidine metabolism; UMP biosynthesis via de novo pathway; UMP from orotate: step 2/2. Its function is as follows. Catalyzes the decarboxylation of orotidine 5'-monophosphate (OMP) to uridine 5'-monophosphate (UMP). The polypeptide is Orotidine 5'-phosphate decarboxylase (Thermoplasma acidophilum (strain ATCC 25905 / DSM 1728 / JCM 9062 / NBRC 15155 / AMRC-C165)).